The following is a 1010-amino-acid chain: Sodium/potassium-transporting ATPase subunit alpha-3 (1010 aa).

The interval 1-21 (MGDKDDRFPKKKKGGTKDMDA) is disordered. The Cytoplasmic portion of the chain corresponds to 1 to 74 (MGDKDDRFPK…NALTPPPTTP (74 aa)). The interval 69–71 (PPP) is interaction with phosphoinositide-3 kinase. A helical membrane pass occupies residues 75–95 (EWVKFCRQLFGGFSILLWTGA). Over 96–118 (ILCFLAYAIQAATEDEPAGDNLY) the chain is Extracellular. A helical transmembrane segment spans residues 119–139 (LGIVLTAVVVITGCFSYFQEA). Topologically, residues 140-275 (KSSKIMESFK…TGKTPIAVEI (136 aa)) are cytoplasmic. A compositionally biased stretch (polar residues) spans 201 to 216 (DNSSLTGESEPQSRSP). The segment at 201 to 221 (DNSSLTGESEPQSRSPDCTHD) is disordered. The helical transmembrane segment at 276–295 (EHFIHIITGVAVFLGVTFFI) threads the bilayer. Topologically, residues 296–307 (LAIILGYTWLKA) are extracellular. The chain crosses the membrane as a helical span at residues 308 to 325 (VIFLIGIIVANVPEGLLA). The Cytoplasmic portion of the chain corresponds to 326–759 (TVTVCLTLTA…EEGRLIFDNL (434 aa)). Aspartate 363 acts as the 4-aspartylphosphate intermediate in catalysis. The Mg(2+) site is built by aspartate 704 and aspartate 708. The helical transmembrane segment at 760 to 779 (KKSIAYTLTSNIPEITPFLF) threads the bilayer. Topologically, residues 780–789 (FIIVNIPLAL) are extracellular. A helical transmembrane segment spans residues 790-810 (GTITILCIDLGTDMGSAISLA). The Cytoplasmic portion of the chain corresponds to 811 to 830 (YETAESDIMKRQPRNPCRDK). The chain crosses the membrane as a helical span at residues 831 to 853 (LVNERLISIAYGQIGMIQALGGF). The Extracellular portion of the chain corresponds to 854–905 (FSYFVILAENGFLPSQLVGIRLNWDDRSLNDLEDSYGQQWTYEQRKIVEFTC). A helical membrane pass occupies residues 906 to 925 (HTAFFVSIVVVQWADLIICK). Residues 926–938 (TRRNSVFQQGMKN) lie on the Cytoplasmic side of the membrane. Serine 930 carries the post-translational modification Phosphoserine; by PKA. A helical membrane pass occupies residues 939-957 (KILIFGLFEETALAAFLSY). Topologically, residues 958–972 (CPGMDVALRMYPLKP) are extracellular. Residues 973-993 (TWWFWAFPYSFLIFVYDEARK) form a helical membrane-spanning segment. The Cytoplasmic portion of the chain corresponds to 994-1010 (LILCRNPGGWVEKETYY).

The protein belongs to the cation transport ATPase (P-type) (TC 3.A.3) family. Type IIC subfamily. In terms of assembly, the sodium/potassium-transporting ATPase is composed of a catalytic alpha subunit, an auxiliary non-catalytic beta subunit and an additional regulatory subunit.

The protein resides in the cell membrane. The catalysed reaction is K(+)(out) + Na(+)(in) + ATP + H2O = K(+)(in) + Na(+)(out) + ADP + phosphate + H(+). Its function is as follows. This is the catalytic component of the active enzyme, which catalyzes the hydrolysis of ATP coupled with the exchange of sodium and potassium ions across the plasma membrane. This action creates the electrochemical gradient of sodium and potassium ions, providing the energy for active transport of various nutrients. This Oreochromis mossambicus (Mozambique tilapia) protein is Sodium/potassium-transporting ATPase subunit alpha-3 (atp1a3).